Reading from the N-terminus, the 110-residue chain is NADH-quinone oxidoreductase subunit K (110 aa).

The next 3 helical transmembrane spans lie at 13–33 (VTHGLIFSILLFVISVAGIII), 38–58 (ILILLMSIELMLLAVNTNFLI), and 70–90 (VFVFFIMAVAAAETAIGLAIV).

Belongs to the complex I subunit 4L family. As to quaternary structure, NDH-1 is composed of 14 different subunits. Subunits NuoA, H, J, K, L, M, N constitute the membrane sector of the complex.

Its subcellular location is the cell inner membrane. The catalysed reaction is a quinone + NADH + 5 H(+)(in) = a quinol + NAD(+) + 4 H(+)(out). NDH-1 shuttles electrons from NADH, via FMN and iron-sulfur (Fe-S) centers, to quinones in the respiratory chain. The immediate electron acceptor for the enzyme in this species is believed to be ubiquinone. Couples the redox reaction to proton translocation (for every two electrons transferred, four hydrogen ions are translocated across the cytoplasmic membrane), and thus conserves the redox energy in a proton gradient. The sequence is that of NADH-quinone oxidoreductase subunit K from Francisella tularensis subsp. holarctica (strain FTNF002-00 / FTA).